We begin with the raw amino-acid sequence, 349 residues long: Histidinol-phosphate aminotransferase (349 aa).

At Lys210 the chain carries N6-(pyridoxal phosphate)lysine.

The protein belongs to the class-II pyridoxal-phosphate-dependent aminotransferase family. Histidinol-phosphate aminotransferase subfamily. Homodimer. Pyridoxal 5'-phosphate is required as a cofactor.

The catalysed reaction is L-histidinol phosphate + 2-oxoglutarate = 3-(imidazol-4-yl)-2-oxopropyl phosphate + L-glutamate. Its pathway is amino-acid biosynthesis; L-histidine biosynthesis; L-histidine from 5-phospho-alpha-D-ribose 1-diphosphate: step 7/9. The chain is Histidinol-phosphate aminotransferase from Flavobacterium johnsoniae (strain ATCC 17061 / DSM 2064 / JCM 8514 / BCRC 14874 / CCUG 350202 / NBRC 14942 / NCIMB 11054 / UW101) (Cytophaga johnsonae).